The chain runs to 64 residues: Prokaryotic ubiquitin-like protein Pup (64 aa).

Residues 1–11 (MAQEQTKRGGG) are compositionally biased toward basic and acidic residues. A disordered region spans residues 1-36 (MAQEQTKRGGGGDDDDVTDLGGPAGQERREKLAEDT). The interval 21-58 (GGPAGQERREKLAEDTDDLLDEIDDVLEENAEDFVRAY) is ARC ATPase binding. Residues 24-52 (AGQERREKLAEDTDDLLDEIDDVLEENAE) adopt a coiled-coil conformation. Gln64 is subject to Deamidated glutamine. An Isoglutamyl lysine isopeptide (Gln-Lys) (interchain with K-? in acceptor proteins) cross-link involves residue Gln64.

Belongs to the prokaryotic ubiquitin-like protein family. Strongly interacts with the proteasome-associated ATPase ARC through a hydrophobic interface; the interacting region of Pup lies in its C-terminal half. There is one Pup binding site per ARC hexamer ring. In terms of processing, is modified by deamidation of its C-terminal glutamine to glutamate by the deamidase Dop, a prerequisite to the subsequent pupylation process.

It functions in the pathway protein degradation; proteasomal Pup-dependent pathway. In terms of biological role, protein modifier that is covalently attached to lysine residues of substrate proteins, thereby targeting them for proteasomal degradation. The tagging system is termed pupylation. This chain is Prokaryotic ubiquitin-like protein Pup, found in Mycobacteroides abscessus (strain ATCC 19977 / DSM 44196 / CCUG 20993 / CIP 104536 / JCM 13569 / NCTC 13031 / TMC 1543 / L948) (Mycobacterium abscessus).